The chain runs to 684 residues: Cleavage and polyadenylation specificity factor subunit 3 (684 aa).

Serine 2 carries the post-translational modification N-acetylserine. Positions 71, 73, 75, 76, 158, and 179 each coordinate Zn(2+). Histidine 396 (proton donor) is an active-site residue. Histidine 418 serves as a coordination point for Zn(2+). Glycyl lysine isopeptide (Lys-Gly) (interchain with G-Cter in SUMO) cross-links involve residues lysine 462, lysine 465, and lysine 545. Serine 659 carries the post-translational modification Phosphoserine. Threonine 681 carries the post-translational modification Phosphothreonine.

It belongs to the metallo-beta-lactamase superfamily. RNA-metabolizing metallo-beta-lactamase-like family. CPSF3 subfamily. In terms of assembly, component of the cleavage and polyadenylation specificity factor (CPSF) complex, composed of CPSF1, CPSF2, CPSF3, CPSF4 and FIP1L1. Interacts with CPSF2, CSTF2 and SYMPK. Interacts with TUT1; the interaction is direct and mediates the recruitment of the CPSF complex on the 3'UTR of pre-mRNAs. Interacts with WDR33. Interacts with ZC3H3. Interacts with ISY1; this interaction is in an RNA independent manner. Interacts with the microprocessor complex subunits DGCR8 and DROSHA; this interaction is in an RNA dependent manner. It depends on Zn(2+) as a cofactor. In terms of processing, sumoylated on Lys-462, Lys-465 and Lys-545, preferentially by SUMO3.

It is found in the nucleus. Its function is as follows. Component of the cleavage and polyadenylation specificity factor (CPSF) complex that plays a key role in pre-mRNA 3'-end formation, recognizing the AAUAAA signal sequence and interacting with poly(A) polymerase and other factors to bring about cleavage and poly(A) addition. Has endonuclease activity, and functions as an mRNA 3'-end-processing endonuclease. Also involved in the histone 3'-end pre-mRNA processing. U7 snRNP-dependent protein that induces both the 3' endoribonucleolytic cleavage of histone pre-mRNAs and acts as a 5' to 3' exonuclease for degrading the subsequent downstream cleavage product (DCP) of mature histone mRNAs. Cleavage occurs after the 5'-ACCCA-3' sequence in the histone pre-mRNA leaving a 3'hydroxyl group on the upstream fragment containing the stem loop (SL) and 5' phosphate on the downstream cleavage product (DCP) starting with CU nucleotides. The U7-dependent 5' to 3' exonuclease activity is processive and degrades the DCP RNA substrate even after complete removal of the U7-binding site. Binds to the downstream cleavage product (DCP) of histone pre-mRNAs and the cleaved DCP RNA substrate in a U7 snRNP dependent manner. Required for the selective processing of microRNAs (miRNAs) during embryonic stem cell differentiation via its interaction with ISY1. Required for entering/progressing through S-phase of the cell cycle. Required for the biogenesis of all miRNAs from the pri-miR-17-92 primary transcript except miR-92a. Only required for the biogenesis of miR-290 and miR-96 from the pri-miR-290-295 and pri-miR-96-183 primary transcripts, respectively. This chain is Cleavage and polyadenylation specificity factor subunit 3 (Cpsf3), found in Mus musculus (Mouse).